Here is a 700-residue protein sequence, read N- to C-terminus: Long chain acyl-CoA synthetase 7, peroxisomal (700 aa).

Positions 1 to 29 (MEFASPEQRRLETIRSHIDTSPTNDQSSS) are disordered. The segment covering 7–18 (EQRRLETIRSHI) has biased composition (basic and acidic residues). Residues 10–18 (RLETIRSHI) carry the Microbody targeting signal motif. Polar residues predominate over residues 19–29 (DTSPTNDQSSS). Residue 266 to 277 (ICYTSGTTGTPK) coordinates ATP. The interval 526–550 (DGWLHTGDIGLWLPGGRLKIIDRKK) is fatty acid-binding. The Microbody targeting signal signature appears at 698–700 (SKL).

The protein belongs to the ATP-dependent AMP-binding enzyme family. In terms of assembly, interacts with PEX5. The cofactor is Mg(2+). Expressed in roots, stems, leaves flowers and germinating seedling. Preferentially expressed in seeds.

Its subcellular location is the peroxisome. The catalysed reaction is a long-chain fatty acid + ATP + CoA = a long-chain fatty acyl-CoA + AMP + diphosphate. It carries out the reaction decanoate + ATP + CoA = decanoyl-CoA + AMP + diphosphate. The enzyme catalyses dodecanoate + ATP + CoA = dodecanoyl-CoA + AMP + diphosphate. It catalyses the reaction tetradecanoate + ATP + CoA = tetradecanoyl-CoA + AMP + diphosphate. The catalysed reaction is hexadecanoate + ATP + CoA = hexadecanoyl-CoA + AMP + diphosphate. It carries out the reaction (9Z)-octadecenoate + ATP + CoA = (9Z)-octadecenoyl-CoA + AMP + diphosphate. The enzyme catalyses (9Z,12Z)-octadecadienoate + ATP + CoA = (9Z,12Z)-octadecadienoyl-CoA + AMP + diphosphate. It catalyses the reaction (9Z,12Z,15Z)-octadecatrienoate + ATP + CoA = (9Z,12Z,15Z)-octadecatrienoyl-CoA + AMP + diphosphate. It participates in lipid metabolism; fatty acid metabolism. Its function is as follows. Activation of long-chain fatty acids for both synthesis of cellular lipids, and degradation via beta-oxidation. Preferentially uses palmitate, palmitoleate, oleate, linoleate and eicosenoate as substrates. Can use myristate and linolenate as substrates. Functions redundantly with LACS6 in lipid mobilization for beta-oxidation during seed germination, which is essential for postgerminative growth and seedling establishment. In Arabidopsis thaliana (Mouse-ear cress), this protein is Long chain acyl-CoA synthetase 7, peroxisomal.